A 775-amino-acid chain; its full sequence is BLOC-2 complex member HPS6 (775 aa).

In terms of assembly, component of the biogenesis of lysosome-related organelles complex-2 (or BLOC2) composed of HPS3, HPS5 and HPS6. Interacts with HPS5 and HPS3. Interacts with biogenesis of lysosome-related organelles complex-1 (BLOC1). Interacts with AP-3 complex. Interacts with MNAT1. Interacts with DCTN1 and dynein intermediate chain. As to expression, ubiquitous.

It localises to the microsome membrane. It is found in the cytoplasm. The protein resides in the cytosol. The protein localises to the early endosome membrane. Its subcellular location is the lysosome membrane. May regulate the synthesis and function of lysosomes and of highly specialized organelles, such as melanosomes and platelet dense granules. Acts as a cargo adapter for the dynein-dynactin motor complex to mediate the transport of lysosomes from the cell periphery to the perinuclear region. Facilitates retrograde lysosomal trafficking by linking the motor complex to lysosomes, and perinuclear positioning of lysosomes is crucial for the delivery of endocytic cargos to lysosomes, for lysosome maturation and functioning. The polypeptide is BLOC-2 complex member HPS6 (HPS6) (Homo sapiens (Human)).